A 518-amino-acid chain; its full sequence is Putative cysteine ligase BshC (518 aa).

Positions 404–474 (AAASAERLAA…RARQLTRLKR (71 aa)) form a coiled coil.

Belongs to the BshC family.

This Deinococcus geothermalis (strain DSM 11300 / CIP 105573 / AG-3a) protein is Putative cysteine ligase BshC.